Consider the following 406-residue polypeptide: Accessory Sec system protein translocase subunit SecY2 (406 aa).

Helical transmembrane passes span 14–34 (SWTV…LPFI), 63–83 (FSLF…WQMF), 108–128 (FAIA…EVGI), 131–151 (GLAI…LVWL), 156–176 (SFFG…ANLP), 190–210 (LPII…AVIV), 246–266 (FMYA…IQIL), 285–305 (PIWL…FAFV), 344–364 (AVIG…IVLI), and 368–388 (YLQL…VYNV).

Belongs to the SecY/SEC61-alpha family. SecY2 subfamily. Component of the accessory SecA2/SecY2 protein translocase complex required to export cell wall proteins. May form heterotrimers with SecE and SecG subunits.

The protein resides in the cell membrane. Its function is as follows. Part of the accessory SecA2/SecY2 system specifically required for export of possible cell wall proteins. The central subunit of a protein translocation channel. The protein is Accessory Sec system protein translocase subunit SecY2 of Streptococcus salivarius (strain CCHSS3).